The following is a 204-amino-acid chain: CASP-like protein 4B4 (204 aa).

The Cytoplasmic segment spans residues 1-60 (MSAAVAASSGAPAADVEKGAAAADANVDGGGAPAAAAASGEGVVSAVVRRWRRQDLLEKS). Residues 61–81 (GSALRVAAWAFSLLAFVVMGA) form a helical membrane-spanning segment. Topologically, residues 82-98 (NDHGDWRQFEHYEEYRY) are extracellular. A helical membrane pass occupies residues 99 to 119 (VVAIGVLAFIYTTLQLVRHGV). The Cytoplasmic segment spans residues 120–130 (RLTGGQDLQGK). A helical transmembrane segment spans residues 131–151 (VAVLVDFAGDQVTAYLLMSAV). Over 152–175 (SAAIPITNRMREGADNVFTDSSAA) the chain is Extracellular. A helical membrane pass occupies residues 176-196 (SISMAFFAFLCLALSALVSGF). Residues 197–204 (KLAKQTYI) are Cytoplasmic-facing.

The protein belongs to the Casparian strip membrane proteins (CASP) family. In terms of assembly, homodimer and heterodimers.

The protein resides in the cell membrane. This Oryza sativa subsp. japonica (Rice) protein is CASP-like protein 4B4.